Consider the following 152-residue polypeptide: Nucleoside diphosphate kinase (152 aa).

ATP contacts are provided by Lys11, Phe59, Arg87, Thr93, Arg104, and Asn114. The active-site Pros-phosphohistidine intermediate is His117.

Belongs to the NDK family. Homotetramer. The cofactor is Mg(2+).

The protein resides in the cytoplasm. It catalyses the reaction a 2'-deoxyribonucleoside 5'-diphosphate + ATP = a 2'-deoxyribonucleoside 5'-triphosphate + ADP. The catalysed reaction is a ribonucleoside 5'-diphosphate + ATP = a ribonucleoside 5'-triphosphate + ADP. Major role in the synthesis of nucleoside triphosphates other than ATP. The ATP gamma phosphate is transferred to the NDP beta phosphate via a ping-pong mechanism, using a phosphorylated active-site intermediate. This is Nucleoside diphosphate kinase from Prochlorococcus marinus (strain MIT 9313).